Consider the following 282-residue polypeptide: MEAENGEVAALVEKITGLHAAISKLPALSPSPQVDALFTELVAACVPSSPVDVTKLGPEAQEMRQDLIRLCSAAEGLLEAHYSDMLTALDSPLDHLGRFPYFDNYVNLSKLEHDLLAGHVAAPARVAFIGSGPLPFSSLFLATYHLPDTRFDNYDRCSVANGRAMKLVGAADEGVRSRMAFHTAEVTDLTAELGAYDVVFLAALVGMTSKEKADAIAHLGKHMADGAVLVREALHGARAFLYPVVELDDVGRGGFQVLAVHHPAGDEVFNSFIVARKVKMSA.

The protein belongs to the nicotianamine synthase (NAS)-like family.

The polypeptide is Nicotianamine synthase-like 5 protein (NAS5) (Hordeum vulgare (Barley)).